The following is a 214-amino-acid chain: GTP cyclohydrolase 1 (214 aa).

Zn(2+) contacts are provided by C108, H111, and C179.

The protein belongs to the GTP cyclohydrolase I family. Toroid-shaped homodecamer, composed of two pentamers of five dimers.

It catalyses the reaction GTP + H2O = 7,8-dihydroneopterin 3'-triphosphate + formate + H(+). Its pathway is cofactor biosynthesis; 7,8-dihydroneopterin triphosphate biosynthesis; 7,8-dihydroneopterin triphosphate from GTP: step 1/1. In Shewanella loihica (strain ATCC BAA-1088 / PV-4), this protein is GTP cyclohydrolase 1.